Here is a 518-residue protein sequence, read N- to C-terminus: Reduced folate transporter (518 aa).

Met-1 carries the N-acetylmethionine modification. Over 1–29 (MVPTGQVAEKQACEEPRQDRELKSWRCLV) the chain is Cytoplasmic. Residues 30–50 (FYLCFFGFMAQLRPGESFITP) form a helical membrane-spanning segment. The folate site is built by Ile-48 and Thr-49. Over 51-62 (YLLQQNFTIEQV) the chain is Extracellular. N-linked (GlcNAc...) asparagine glycosylation occurs at Asn-56. A helical membrane pass occupies residues 63–85 (TNEIIPVLPYSHLAVLVPIFLLT). Over 86–89 (DYLR) the chain is Cytoplasmic. The helical transmembrane segment at 90 to 110 (YKPILILQCLSFMCVWLLLLL) threads the bilayer. Residues 111–114 (GTSV) lie on the Extracellular side of the membrane. The chain crosses the membrane as a helical span at residues 115 to 137 (VHMQLMEVFYSVTMAARIAYSSY). Folate contacts are provided by Glu-121 and Arg-131. The Cytoplasmic portion of the chain corresponds to 138 to 151 (IFSLVRPSRYQRMA). Residues 152 to 176 (SYSRAAVLLGVFTSSVLGQVLWPLE) form a helical membrane-spanning segment. Val-162 contributes to the folate binding site. Topologically, residues 177–181 (QKSQN) are extracellular. A helical membrane pass occupies residues 182–200 (SNMLNYISLGFIIFSLGLS). The Cytoplasmic segment spans residues 201 to 266 (LFLKRPKHSL…LSELVGNLRQ (66 aa)). Residues 267-292 (PQLRLWCLWWVFNSAGYYLIVYYVHV) traverse the membrane as a helical segment. 3 residues coordinate folate: Ala-281, Gly-282, and Ile-286. The Extracellular portion of the chain corresponds to 293 to 300 (LWSIDKNL). A helical transmembrane segment spans residues 301–323 (NYNGAVDAASTLLSAITSFSAGF). Over 324–329 (VKIRWA) the chain is Cytoplasmic. Residues 330 to 350 (LWSKLVIASVIAIQAGLVFCM) form a helical membrane-spanning segment. Residues 351 to 353 (YMV) are Extracellular-facing. The chain crosses the membrane as a helical span at residues 354-377 (HYVTWVHKIWVLYMTYVLFRGAYQ). 2 residues coordinate folate: Tyr-366 and Val-370. The Cytoplasmic segment spans residues 378–391 (FLVPIATFQIASSL). The chain crosses the membrane as a helical span at residues 392–415 (SKELCALVFGINTFLATALKTAIT). Positions 407 to 419 (ATALKTAITLVVS) are required for substrate-binding. The Extracellular portion of the chain corresponds to 416–423 (LVVSDKRG). The chain crosses the membrane as a helical span at residues 424–448 (LGLKVEKQFCIYSVYFMVLSVICFV). The Cytoplasmic portion of the chain corresponds to 449–512 (GAVLDGVRYC…DGVEDSEASL (64 aa)). Phosphoserine is present on residues Ser-473, Ser-478, and Ser-483. The segment at 480 to 518 (QVPSMQDGGLGGLQPSAPQLLPEDGVEDSEASLRAEAKA) is disordered.

This sequence belongs to the reduced folate carrier (RFC) transporter (TC 2.A.48) family.

It is found in the cell membrane. The protein localises to the apical cell membrane. Its subcellular location is the basolateral cell membrane. It catalyses the reaction 5-amino-1-(5-phospho-beta-D-ribosyl)imidazole-4-carboxamide(in) + (6S)-5-methyl-5,6,7,8-tetrahydrofolate(out) = 5-amino-1-(5-phospho-beta-D-ribosyl)imidazole-4-carboxamide(out) + (6S)-5-methyl-5,6,7,8-tetrahydrofolate(in). Antiporter that mediates the import of reduced folates, driven by the export of organic anions. Also acts as an importer of immunoreactive cyclic dinucleotides, but with a lower transporter activity. Mechanistically, acts as a secondary active transporter, which exports intracellular organic anions down their concentration gradients to facilitate the uptake of its substrates. Has high affinity for N5-methyltetrahydrofolate, the predominant circulating form of folate. Also mediates the import of antifolate drug methotrexate. 5-amino-4-imidazolecarboxamide riboside (AICAR), when phosphorylated to AICAR monophosphate, can serve as an organic anion for antiporter activity. The sequence is that of Reduced folate transporter from Cricetulus griseus (Chinese hamster).